We begin with the raw amino-acid sequence, 317 residues long: DNA-directed RNA polymerase subunit alpha (317 aa).

The tract at residues 1-229 (MLNEFIYPDK…KHYELLENIF (229 aa)) is alpha N-terminal domain (alpha-NTD). Residues 245–317 (AEKLSLSIEE…ELGMNIETQR (73 aa)) form an alpha C-terminal domain (alpha-CTD) region.

This sequence belongs to the RNA polymerase alpha chain family. In terms of assembly, homodimer. The RNAP catalytic core consists of 2 alpha, 1 beta, 1 beta' and 1 omega subunit. When a sigma factor is associated with the core the holoenzyme is formed, which can initiate transcription.

It carries out the reaction RNA(n) + a ribonucleoside 5'-triphosphate = RNA(n+1) + diphosphate. In terms of biological role, DNA-dependent RNA polymerase catalyzes the transcription of DNA into RNA using the four ribonucleoside triphosphates as substrates. This Aquifex aeolicus (strain VF5) protein is DNA-directed RNA polymerase subunit alpha.